Here is a 331-residue protein sequence, read N- to C-terminus: uncharacterized protein (331 aa).

Residue 43–50 coordinates ATP; sequence GANESGKS.

This is an uncharacterized protein from Methanocaldococcus jannaschii (strain ATCC 43067 / DSM 2661 / JAL-1 / JCM 10045 / NBRC 100440) (Methanococcus jannaschii).